Consider the following 137-residue polypeptide: Ribosome-binding factor A (137 aa).

The protein belongs to the RbfA family. As to quaternary structure, monomer. Binds 30S ribosomal subunits, but not 50S ribosomal subunits or 70S ribosomes.

It is found in the cytoplasm. In terms of biological role, one of several proteins that assist in the late maturation steps of the functional core of the 30S ribosomal subunit. Associates with free 30S ribosomal subunits (but not with 30S subunits that are part of 70S ribosomes or polysomes). Required for efficient processing of 16S rRNA. May interact with the 5'-terminal helix region of 16S rRNA. The polypeptide is Ribosome-binding factor A (Cereibacter sphaeroides (strain KD131 / KCTC 12085) (Rhodobacter sphaeroides)).